The following is a 215-amino-acid chain: MSKVYDWFQERLEVQALADDITSKYVPPHVNIFYCLGGVTLICFLVQFATGFAMTYYYKPTVAEAFSSVNYIMDEVSFGWLIRSIHRWSASMMVLAMILHTFRVYLTGGFKRPRELTWVTGVLLACLTVSFGVTGYSLPWDQVGYWAVKIVTQVPSAIPVVGDLIVEFLRGGAGVGQETLTRFYSAHTFVLPWLTVVFMLMHFLMIRKQGISGPL.

The chain crosses the membrane as a helical span at residues 32 to 52 (IFYCLGGVTLICFLVQFATGF). Residue Cys-35 coordinates heme c. Heme b is bound by residues His-86 and His-100. 3 helical membrane-spanning segments follow: residues 90-110 (ASMMVLAMILHTFRVYLTGGF), 116-136 (LTWVTGVLLACLTVSFGVTGY), and 186-206 (AHTFVLPWLTVVFMLMHFLMI). Heme b-binding residues include His-187 and His-202.

It belongs to the cytochrome b family. PetB subfamily. The 4 large subunits of the cytochrome b6-f complex are cytochrome b6, subunit IV (17 kDa polypeptide, PetD), cytochrome f and the Rieske protein, while the 4 small subunits are PetG, PetL, PetM and PetN. The complex functions as a dimer. It depends on heme b as a cofactor. Heme c serves as cofactor.

It is found in the cell inner membrane. Its function is as follows. Component of the cytochrome b6-f complex, which mediates electron transfer between photosystem II (PSII) and photosystem I (PSI), cyclic electron flow around PSI, and state transitions. The polypeptide is Cytochrome b6 (Gloeobacter violaceus (strain ATCC 29082 / PCC 7421)).